Consider the following 85-residue polypeptide: Cloacin immunity protein (85 aa).

Lys-12 carries the post-translational modification N6-methyllysine.

It belongs to the cloacin immunity protein family.

Its function is as follows. This protein complexes with cloacin protein in equimolar amounts and inhibits it by binding with high affinity to the C-terminal catalytic domain of cloacin. The polypeptide is Cloacin immunity protein (cim) (Escherichia coli).